The following is a 130-amino-acid chain: Protachykinin-1 (130 aa).

An N-terminal signal peptide occupies residues 1 to 19 (MKILVAVAVFFLVSTQLFA). Residues 20 to 56 (EEIDANDDLNYWSDWSDSDQIKEAMPEPFEHLLQRIA) constitute a propeptide that is removed on maturation. Methionine amide occurs at positions 68 and 107.

Belongs to the tachykinin family. In terms of processing, the substance P form is cleaved at Pro-59 by the prolyl endopeptidase FAP (seprase) activity (in vitro). Substance P is also cleaved and degraded by Angiotensin-converting enzyme (ACE) and neprilysin (MME).

Its subcellular location is the secreted. Its function is as follows. Tachykinins are active peptides which excite neurons, evoke behavioral responses, are potent vasodilators and secretagogues, and contract (directly or indirectly) many smooth muscles. This chain is Protachykinin-1 (Tac1), found in Mus musculus (Mouse).